We begin with the raw amino-acid sequence, 378 residues long: Glutamate 5-kinase (378 aa).

Residue K19 coordinates ATP. Residues S59, D146, and N158 each coordinate substrate. 178–179 contacts ATP; sequence TD. Residues 285-363 form the PUA domain; the sequence is RGSVTVDPGA…SEFEKLLGYT (79 aa).

It belongs to the glutamate 5-kinase family.

It is found in the cytoplasm. It carries out the reaction L-glutamate + ATP = L-glutamyl 5-phosphate + ADP. The protein operates within amino-acid biosynthesis; L-proline biosynthesis; L-glutamate 5-semialdehyde from L-glutamate: step 1/2. Catalyzes the transfer of a phosphate group to glutamate to form L-glutamate 5-phosphate. The chain is Glutamate 5-kinase from Polaromonas naphthalenivorans (strain CJ2).